A 631-amino-acid polypeptide reads, in one-letter code: MGNGITKNPCFSGDPYAAAVASDPLPDDSHGHSFTYVPSSAAAFDHSPRSAAASSETSYFSLSGAAISANPATSASMPSFRLYNELTWPPSTACTFESSRSFAAAPLIQAAPPRLSMSGPLHATSGRFSEASGSASTASDRFSDHPFMDGMLDRASSASSTARLMPSFSHLMSEPRVAQSGLSNERSLIRSLVRVASKLRFGVPLSGRRSNGPAEPTTKSDGDYRSTPKGNVEWAQGMAGEDRFHVAVSEEHGWVFVGIYDGFNGPDATDYLFANLYVAVHRELKGVLWDDIQGVDVVTDNLPDPALANATHLCFLDAGGVGGGGDDDPDAERKAKRGRIERNADDDGASSVHRDVLKALARALARTEEAFFAAAEERAAQSPELGLVGSCVLVMLMKGKDVYLMNVGDSRAVLARRREPDFKDIFFRPDQDLQLLKAEVMRELEAHDRNGLQCVQLTPEHSAAAEEEVRRIRSQHLTDRQAVVNGRVKGKLSVTRAFGAGYLKQPKWNDRLLEAFKVDYIGAEPYISCTPSLRHHRISSNDRFLVLSSDGLYQYFTNKEVVDQVAMFTAEQPDGDPAKHLVGELVLRAARKAGMDCRRLLEIPHGDRRNYHDDVSIIVMSFEGRIWRSSV.

Disordered regions lie at residues 119–142 (GPLH…SDRF) and 205–231 (LSGR…PKGN). Residues 131–140 (ASGSASTASD) show a composition bias toward polar residues. Positions 221 to 622 (DGDYRSTPKG…DDVSIIVMSF (402 aa)) constitute a PPM-type phosphatase domain. Asp-261 and Gly-262 together coordinate Mn(2+). A disordered region spans residues 324–347 (GGDDDPDAERKAKRGRIERNADDD). The Mn(2+) site is built by Asp-550 and Asp-613.

It belongs to the PP2C family. Mg(2+) serves as cofactor. It depends on Mn(2+) as a cofactor.

It catalyses the reaction O-phospho-L-seryl-[protein] + H2O = L-seryl-[protein] + phosphate. It carries out the reaction O-phospho-L-threonyl-[protein] + H2O = L-threonyl-[protein] + phosphate. The sequence is that of Probable protein phosphatase 2C 31 from Oryza sativa subsp. japonica (Rice).